Here is a 140-residue protein sequence, read N- to C-terminus: Small ribosomal subunit protein eS17x (140 aa).

Belongs to the eukaryotic ribosomal protein eS17 family.

This chain is Small ribosomal subunit protein eS17x (RPS17C), found in Arabidopsis thaliana (Mouse-ear cress).